The primary structure comprises 440 residues: 3-phosphoshikimate 1-carboxyvinyltransferase (440 aa).

The 3-phosphoshikimate site is built by Lys-25, Ser-26, and Arg-30. A phosphoenolpyruvate-binding site is contributed by Lys-25. The phosphoenolpyruvate site is built by Gly-96 and Arg-124. Residues Ser-168, Gln-169, Asp-310, and Lys-337 each contribute to the 3-phosphoshikimate site. Gln-169 serves as a coordination point for phosphoenolpyruvate. Asp-310 functions as the Proton acceptor in the catalytic mechanism. Residues Arg-341, Arg-382, and Lys-409 each coordinate phosphoenolpyruvate.

The protein belongs to the EPSP synthase family. In terms of assembly, monomer.

The protein resides in the cytoplasm. It catalyses the reaction 3-phosphoshikimate + phosphoenolpyruvate = 5-O-(1-carboxyvinyl)-3-phosphoshikimate + phosphate. It participates in metabolic intermediate biosynthesis; chorismate biosynthesis; chorismate from D-erythrose 4-phosphate and phosphoenolpyruvate: step 6/7. Its function is as follows. Catalyzes the transfer of the enolpyruvyl moiety of phosphoenolpyruvate (PEP) to the 5-hydroxyl of shikimate-3-phosphate (S3P) to produce enolpyruvyl shikimate-3-phosphate and inorganic phosphate. The sequence is that of 3-phosphoshikimate 1-carboxyvinyltransferase from Chlamydia trachomatis serovar A (strain ATCC VR-571B / DSM 19440 / HAR-13).